We begin with the raw amino-acid sequence, 273 residues long: Dermonecrotic toxin LspaSicTox-alphaIA2i (273 aa).

Residue H5 is part of the active site. 2 residues coordinate Mg(2+): E25 and D27. The Nucleophile role is filled by H41. 2 disulfides stabilise this stretch: C45-C51 and C47-C190. Residue D85 coordinates Mg(2+).

It belongs to the arthropod phospholipase D family. Class II subfamily. Mg(2+) is required as a cofactor. As to expression, expressed by the venom gland.

It is found in the secreted. The catalysed reaction is an N-(acyl)-sphingosylphosphocholine = an N-(acyl)-sphingosyl-1,3-cyclic phosphate + choline. It catalyses the reaction an N-(acyl)-sphingosylphosphoethanolamine = an N-(acyl)-sphingosyl-1,3-cyclic phosphate + ethanolamine. It carries out the reaction a 1-acyl-sn-glycero-3-phosphocholine = a 1-acyl-sn-glycero-2,3-cyclic phosphate + choline. The enzyme catalyses a 1-acyl-sn-glycero-3-phosphoethanolamine = a 1-acyl-sn-glycero-2,3-cyclic phosphate + ethanolamine. Its function is as follows. Dermonecrotic toxins cleave the phosphodiester linkage between the phosphate and headgroup of certain phospholipids (sphingolipid and lysolipid substrates), forming an alcohol (often choline) and a cyclic phosphate. This toxin acts on sphingomyelin (SM). It may also act on ceramide phosphoethanolamine (CPE), lysophosphatidylcholine (LPC) and lysophosphatidylethanolamine (LPE), but not on lysophosphatidylserine (LPS), and lysophosphatidylglycerol (LPG). It acts by transphosphatidylation, releasing exclusively cyclic phosphate products as second products. Induces dermonecrosis, hemolysis, increased vascular permeability, edema, inflammatory response, and platelet aggregation. The sequence is that of Dermonecrotic toxin LspaSicTox-alphaIA2i from Loxosceles spadicea (Recluse spider).